The following is an 88-amino-acid chain: MKGLAAALLVLCTVALCSCAQVGTKKEFCCLVYTSRQIPQKFIVDYSETSPQCTKPGVILLSKKRRQICADPNKKWVQKYISDLKLNA.

The first 19 residues, 1–19, serve as a signal peptide directing secretion; sequence MKGLAAALLVLCTVALCSC. 2 disulfide bridges follow: C29-C53 and C30-C69.

Belongs to the intercrine beta (chemokine CC) family. Post-translationally, the Cys-29/Cys-53 disulfide bond is required for activity.

Its subcellular location is the secreted. Its function is as follows. Chemotactic factor that attracts lymphocytes but not monocytes or granulocytes. May be involved in B-cell migration into B-cell follicles in lymph nodes. Attracts naive T-lymphocytes toward dendritic cells and activated macrophages in lymph nodes, has chemotactic activity for naive T-cells, CD4+ and CD8+ T-cells and thus may play a role in both humoral and cell-mediated immunity responses. The polypeptide is C-C motif chemokine 18 (CCL18) (Macaca mulatta (Rhesus macaque)).